A 305-amino-acid polypeptide reads, in one-letter code: HPr kinase/phosphorylase (305 aa).

Active-site residues include His138 and Lys159. 153-160 contributes to the ATP binding site; that stretch reads GESGIGKS. Ser160 is a Mg(2+) binding site. Catalysis depends on Asp177, which acts as the Proton acceptor; for phosphorylation activity. Proton donor; for dephosphorylation activity. An important for the catalytic mechanism of both phosphorylation and dephosphorylation region spans residues 201-210; that stretch reads IEIRGIGILD. Residue Glu202 coordinates Mg(2+). The active site involves Arg243. Residues 264-269 are important for the catalytic mechanism of dephosphorylation; that stretch reads PVRPGR.

Belongs to the HPrK/P family. As to quaternary structure, homohexamer. Mg(2+) serves as cofactor.

It catalyses the reaction [HPr protein]-L-serine + ATP = [HPr protein]-O-phospho-L-serine + ADP + H(+). It carries out the reaction [HPr protein]-O-phospho-L-serine + phosphate + H(+) = [HPr protein]-L-serine + diphosphate. In terms of biological role, catalyzes the ATP- as well as the pyrophosphate-dependent phosphorylation of a specific serine residue in HPr, a phosphocarrier protein of the phosphoenolpyruvate-dependent sugar phosphotransferase system (PTS). HprK/P also catalyzes the pyrophosphate-producing, inorganic phosphate-dependent dephosphorylation (phosphorolysis) of seryl-phosphorylated HPr (P-Ser-HPr). The two antagonistic activities of HprK/P are regulated by several intracellular metabolites, which change their concentration in response to the absence or presence of rapidly metabolisable carbon sources (glucose, fructose, etc.) in the growth medium. Therefore, by controlling the phosphorylation state of HPr, HPrK/P is a sensor enzyme that plays a major role in the regulation of carbon metabolism and sugar transport: it mediates carbon catabolite repression (CCR), and regulates PTS-catalyzed carbohydrate uptake and inducer exclusion. The sequence is that of HPr kinase/phosphorylase from Caldanaerobacter subterraneus subsp. tengcongensis (strain DSM 15242 / JCM 11007 / NBRC 100824 / MB4) (Thermoanaerobacter tengcongensis).